Reading from the N-terminus, the 217-residue chain is Large ribosomal subunit protein bL25 (217 aa).

Residues 178–217 form a disordered region; sequence VVAPTEEPTEEEIEAMEGEQQTEEPEVVGESKEDEEKTEE. The span at 184–205 shows a compositional bias: acidic residues; that stretch reads EPTEEEIEAMEGEQQTEEPEVV. Positions 206-217 are enriched in basic and acidic residues; the sequence is GESKEDEEKTEE.

It belongs to the bacterial ribosomal protein bL25 family. CTC subfamily. Part of the 50S ribosomal subunit; part of the 5S rRNA/L5/L18/L25 subcomplex. Contacts the 5S rRNA. Binds to the 5S rRNA independently of L5 and L18.

This is one of the proteins that binds to the 5S RNA in the ribosome where it forms part of the central protuberance. The polypeptide is Large ribosomal subunit protein bL25 (Staphylococcus aureus (strain MRSA252)).